The chain runs to 503 residues: Lysine--tRNA ligase (503 aa).

Residues Glu410 and Glu417 each coordinate Mg(2+).

The protein belongs to the class-II aminoacyl-tRNA synthetase family. As to quaternary structure, homodimer. It depends on Mg(2+) as a cofactor.

It localises to the cytoplasm. The catalysed reaction is tRNA(Lys) + L-lysine + ATP = L-lysyl-tRNA(Lys) + AMP + diphosphate. The protein is Lysine--tRNA ligase of Prochlorococcus marinus (strain MIT 9211).